Reading from the N-terminus, the 374-residue chain is Large ribosomal subunit protein uL4 (374 aa).

The tract at residues 336 to 355 is disordered; sequence EKAMAKGMQNKKNREARHAA.

Belongs to the universal ribosomal protein uL4 family.

The sequence is that of Large ribosomal subunit protein uL4 (RPL4) from Trypanosoma brucei brucei.